The sequence spans 153 residues: Small ribosomal subunit protein eS19 (153 aa).

It belongs to the eukaryotic ribosomal protein eS19 family. In terms of assembly, part of the 30S ribosomal subunit.

Its function is as follows. May be involved in maturation of the 30S ribosomal subunit. The sequence is that of Small ribosomal subunit protein eS19 from Aeropyrum pernix (strain ATCC 700893 / DSM 11879 / JCM 9820 / NBRC 100138 / K1).